The following is a 1402-amino-acid chain: DNA-directed RNA polymerase subunit beta' (1402 aa).

The Zn(2+) site is built by cysteine 72, cysteine 74, cysteine 87, and cysteine 90. Positions 463, 465, and 467 each coordinate Mg(2+). Residues cysteine 811, cysteine 885, cysteine 892, and cysteine 895 each contribute to the Zn(2+) site.

The protein belongs to the RNA polymerase beta' chain family. The RNAP catalytic core consists of 2 alpha, 1 beta, 1 beta' and 1 omega subunit. When a sigma factor is associated with the core the holoenzyme is formed, which can initiate transcription. Mg(2+) is required as a cofactor. Zn(2+) serves as cofactor.

It catalyses the reaction RNA(n) + a ribonucleoside 5'-triphosphate = RNA(n+1) + diphosphate. Functionally, DNA-dependent RNA polymerase catalyzes the transcription of DNA into RNA using the four ribonucleoside triphosphates as substrates. The sequence is that of DNA-directed RNA polymerase subunit beta' from Paracoccus denitrificans (strain Pd 1222).